Consider the following 327-residue polypeptide: MTATKQHKKVILVGDGAVGSSYAFALVTQNIAQELGIIDIFKEKTQGDAEDLSHALAFTSPKKIYAADYSDCHDADLVVLTAGAPQKPGETRLDLVEKNLRINKEVVTQIVASGFKGIFLVAANPVDVLTYSTWKFSGFPKERVIGSGTSLDSARFRQALAAKIGVDARSVHAYIMGEHGDSEFAVWSHANVAGVGLYDWLQANRDIDEQGLVDLFISVRDAAYSIINKKGATFYGIAVALARITKAILDDENAVLPLSVFQEGQYEGVEDCYIGQPAIVGAYGIVRPVNIPLNDAELQKMQASANQLKAIIDEAFAKEEFASAAKN.

NAD(+) is bound by residues Val-18, Asp-39, Lys-44, Tyr-69, and 83–84; that span reads GA. Residues Gln-86, Arg-92, and 124-127 contribute to the substrate site; that span reads NPVD. Residues 122-124 and Ser-147 contribute to the NAD(+) site; that span reads AAN. 152–155 serves as a coordination point for substrate; it reads DSAR. The beta-D-fructose 1,6-bisphosphate site is built by Arg-157 and His-172. Catalysis depends on His-179, which acts as the Proton acceptor. Residue Tyr-224 is modified to Phosphotyrosine. Thr-233 contacts substrate.

It belongs to the LDH/MDH superfamily. LDH family. Homotetramer.

It is found in the cytoplasm. The enzyme catalyses (S)-lactate + NAD(+) = pyruvate + NADH + H(+). The protein operates within fermentation; pyruvate fermentation to lactate; (S)-lactate from pyruvate: step 1/1. With respect to regulation, allosterically activated by fructose 1,6-bisphosphate (FBP). Functionally, catalyzes the conversion of lactate to pyruvate. The protein is L-lactate dehydrogenase of Streptococcus pyogenes serotype M3 (strain SSI-1).